Consider the following 293-residue polypeptide: Small ribosomal subunit protein uS2 (293 aa).

The interval 265 to 293 (DGGDWAASSAPAPGGENWAEAQPAEGAKW) is disordered.

Belongs to the universal ribosomal protein uS2 family. In terms of assembly, component of the small ribosomal subunit. Mature ribosomes consist of a small (40S) and a large (60S) subunit. The 40S subunit contains about 33 different proteins and 1 molecule of RNA (18S). The 60S subunit contains about 49 different proteins and 3 molecules of RNA (25S, 5.8S and 5S). Interacts with rps21.

The protein localises to the cytoplasm. In terms of biological role, required for the assembly and/or stability of the 40S ribosomal subunit. Required for the processing of the 20S rRNA-precursor to mature 18S rRNA in a late step of the maturation of 40S ribosomal subunits. The chain is Small ribosomal subunit protein uS2 (rps0) from Emericella nidulans (strain FGSC A4 / ATCC 38163 / CBS 112.46 / NRRL 194 / M139) (Aspergillus nidulans).